Here is a 133-residue protein sequence, read N- to C-terminus: Small ribosomal subunit protein uS8 (133 aa).

Belongs to the universal ribosomal protein uS8 family. In terms of assembly, part of the 30S ribosomal subunit. Contacts proteins S5 and S12.

Its function is as follows. One of the primary rRNA binding proteins, it binds directly to 16S rRNA central domain where it helps coordinate assembly of the platform of the 30S subunit. This chain is Small ribosomal subunit protein uS8, found in Endomicrobium trichonymphae.